A 123-amino-acid polypeptide reads, in one-letter code: UPF0102 protein Pput_4400 (123 aa).

This sequence belongs to the UPF0102 family.

The sequence is that of UPF0102 protein Pput_4400 from Pseudomonas putida (strain ATCC 700007 / DSM 6899 / JCM 31910 / BCRC 17059 / LMG 24140 / F1).